The following is a 470-amino-acid chain: Uronate isomerase (470 aa).

The protein belongs to the metallo-dependent hydrolases superfamily. Uronate isomerase family.

It carries out the reaction D-glucuronate = D-fructuronate. It catalyses the reaction aldehydo-D-galacturonate = keto-D-tagaturonate. The protein operates within carbohydrate metabolism; pentose and glucuronate interconversion. The protein is Uronate isomerase of Salmonella heidelberg (strain SL476).